A 142-amino-acid chain; its full sequence is Large ribosomal subunit protein bL17 (142 aa).

This sequence belongs to the bacterial ribosomal protein bL17 family. Part of the 50S ribosomal subunit. Contacts protein L32.

The sequence is that of Large ribosomal subunit protein bL17 from Wolbachia pipientis subsp. Culex pipiens (strain wPip).